We begin with the raw amino-acid sequence, 353 residues long: Photosystem II D2 protein (353 aa).

Thr2 carries the post-translational modification N-acetylthreonine. The residue at position 2 (Thr2) is a Phosphothreonine. A helical membrane pass occupies residues 41–61; sequence CAYFALGGWFTGTTFVTSWYT. Residue His118 participates in chlorophyll a binding. A helical membrane pass occupies residues 125 to 141; the sequence is GFMLRQFELARSVQLRP. Residues Gln130 and Asn143 each contribute to the pheophytin a site. The helical transmembrane segment at 153 to 166 threads the bilayer; sequence VFVSVFLIYPLGQS. Position 198 (His198) interacts with chlorophyll a. Residues 208–228 traverse the membrane as a helical segment; that stretch reads AALLCAIHGATVENTLFEDGD. His215 and Phe262 together coordinate a plastoquinone. Position 215 (His215) interacts with Fe cation. Position 269 (His269) interacts with Fe cation. The helical transmembrane segment at 279 to 295 threads the bilayer; that stretch reads GLWMSALGVVGLALNLR.

Belongs to the reaction center PufL/M/PsbA/D family. PSII is composed of 1 copy each of membrane proteins PsbA, PsbB, PsbC, PsbD, PsbE, PsbF, PsbH, PsbI, PsbJ, PsbK, PsbL, PsbM, PsbT, PsbX, PsbY, PsbZ, Psb30/Ycf12, at least 3 peripheral proteins of the oxygen-evolving complex and a large number of cofactors. It forms dimeric complexes. It depends on The D1/D2 heterodimer binds P680, chlorophylls that are the primary electron donor of PSII, and subsequent electron acceptors. It shares a non-heme iron and each subunit binds pheophytin, quinone, additional chlorophylls, carotenoids and lipids. There is also a Cl(-1) ion associated with D1 and D2, which is required for oxygen evolution. The PSII complex binds additional chlorophylls, carotenoids and specific lipids. as a cofactor.

It is found in the plastid. Its subcellular location is the chloroplast thylakoid membrane. It catalyses the reaction 2 a plastoquinone + 4 hnu + 2 H2O = 2 a plastoquinol + O2. Functionally, photosystem II (PSII) is a light-driven water:plastoquinone oxidoreductase that uses light energy to abstract electrons from H(2)O, generating O(2) and a proton gradient subsequently used for ATP formation. It consists of a core antenna complex that captures photons, and an electron transfer chain that converts photonic excitation into a charge separation. The D1/D2 (PsbA/PsbD) reaction center heterodimer binds P680, the primary electron donor of PSII as well as several subsequent electron acceptors. D2 is needed for assembly of a stable PSII complex. The polypeptide is Photosystem II D2 protein (Chloranthus spicatus (Chulantree)).